The following is a 275-amino-acid chain: 2-dehydro-3-deoxyphosphooctonate aldolase (275 aa).

It belongs to the KdsA family.

Its subcellular location is the cytoplasm. The enzyme catalyses D-arabinose 5-phosphate + phosphoenolpyruvate + H2O = 3-deoxy-alpha-D-manno-2-octulosonate-8-phosphate + phosphate. It functions in the pathway carbohydrate biosynthesis; 3-deoxy-D-manno-octulosonate biosynthesis; 3-deoxy-D-manno-octulosonate from D-ribulose 5-phosphate: step 2/3. The protein operates within bacterial outer membrane biogenesis; lipopolysaccharide biosynthesis. This is 2-dehydro-3-deoxyphosphooctonate aldolase from Francisella tularensis subsp. novicida (strain U112).